Consider the following 384-residue polypeptide: MPKTAKNKRNNAASGPYDKKSKGSGSTNIFKFDKDYGQHILKNPGISDAIVEKAFLKPTDVVVEVGPGTGNITVRALERAKKVIAIELDPRMGAEVTKRVQGTPLAKKLEVILGDVIKLPQIPPCDALISNTPYQISSPLIFKMLSMPQPPRVAVLMFQREFAKRLVAKPGDSLYSRLTVNVNFWATCTHIMKVGKANFKPPPKVESDVVRIEPYLGSARPNIAFEEFDGLLRIAFNRKNKTLRAAFSIKEVLALCEKNYKVYCTLHNIPLDESVLSDPSLTADMDVDMDANSDTDNDNDGDAMEEDDDDMPTFFKEVKEAEAAKEAAKTPSKNPKSKVALIVRAKINKVLTKTGLANKRARQCDQNDFLKLLLAFHEEGIHFS.

A disordered region spans residues M1–S24. S-adenosyl-L-methionine is bound by residues H39, L41, G66, E87, D115, and N131. Positions M289 to D309 are disordered.

It belongs to the class I-like SAM-binding methyltransferase superfamily. rRNA adenine N(6)-methyltransferase family.

Its subcellular location is the cytoplasm. The protein localises to the nucleus. It localises to the nucleolus. It catalyses the reaction adenosine(1779)/adenosine(1780) in 18S rRNA + 4 S-adenosyl-L-methionine = N(6)-dimethyladenosine(1779)/N(6)-dimethyladenosine(1780) in 18S rRNA + 4 S-adenosyl-L-homocysteine + 4 H(+). In terms of biological role, specifically dimethylates two adjacent adenosines in the loop of a conserved hairpin near the 3'-end of 18S rRNA in the 40S particle. The polypeptide is Dimethyladenosine transferase (DIM1) (Chaetomium thermophilum (strain DSM 1495 / CBS 144.50 / IMI 039719) (Thermochaetoides thermophila)).